The sequence spans 105 residues: SAGA-associated factor 11 (105 aa).

The SGF11-type zinc finger occupies F76–C97.

The protein belongs to the SGF11 family. As to quaternary structure, component of the 1.8 MDa SAGA transcription coactivator-HAT complex. SAGA is built of 5 distinct domains with specialized functions. Within the SAGA complex, SUS1, SGF11, SGF73 and UBP8 form an additional subcomplex of SAGA called the DUB module (deubiquitination module). Interacts directly with SGF73, SUS1 and UBP8.

It is found in the nucleus. In terms of biological role, functions as a component of the transcription regulatory histone acetylation (HAT) complex SAGA. At the promoters, SAGA is required for recruitment of the basal transcription machinery. It influences RNA polymerase II transcriptional activity through different activities such as TBP interaction and promoter selectivity, interaction with transcription activators, and chromatin modification through histone acetylation and deubiquitination. SAGA acetylates nucleosomal histone H3 to some extent (to form H3K9ac, H3K14ac, H3K18ac and H3K23ac). SAGA interacts with DNA via upstream activating sequences (UASs). Involved in transcriptional regulation of a subset of SAGA-regulated genes. Within the SAGA complex, participates in a subcomplex, that specifically deubiquitinates histones H2B. The polypeptide is SAGA-associated factor 11 (Eremothecium gossypii (strain ATCC 10895 / CBS 109.51 / FGSC 9923 / NRRL Y-1056) (Yeast)).